A 191-amino-acid chain; its full sequence is MVKMIVGLGNPGSKYNDTKHNIGFMAIDRIVKNLDVNFTEDKNFKAEIGSDFINGEKIYFIKPTTFMNNSGIAVKALLTYYNISIKDMIIIYDDLDMEVGKIRFRQKGSAGGHNGIKSIIAHLGTQEFDRIKVGIGRPNGRMTVINHVLGKFDKNDEIMISNTLDKVDNAVKYYLQTNDFQKTMQKYNGLK.

Y15 lines the tRNA pocket. H20 functions as the Proton acceptor in the catalytic mechanism. Positions 66, 68, and 114 each coordinate tRNA.

It belongs to the PTH family. In terms of assembly, monomer.

It localises to the cytoplasm. It catalyses the reaction an N-acyl-L-alpha-aminoacyl-tRNA + H2O = an N-acyl-L-amino acid + a tRNA + H(+). Its function is as follows. Hydrolyzes ribosome-free peptidyl-tRNAs (with 1 or more amino acids incorporated), which drop off the ribosome during protein synthesis, or as a result of ribosome stalling. Functionally, catalyzes the release of premature peptidyl moieties from peptidyl-tRNA molecules trapped in stalled 50S ribosomal subunits, and thus maintains levels of free tRNAs and 50S ribosomes. This Streptococcus agalactiae serotype Ia (strain ATCC 27591 / A909 / CDC SS700) protein is Peptidyl-tRNA hydrolase.